Reading from the N-terminus, the 275-residue chain is N-(5'-phosphoribosyl)anthranilate isomerase 2, chloroplastic (275 aa).

The N-terminal 32 residues, 1 to 32 (MSTGISTDLHVHFGALNFSKTYKSGLSNRTVS), are a transit peptide targeting the chloroplast.

This sequence belongs to the TrpF family. In terms of tissue distribution, expressed in roots and shoots.

It localises to the plastid. It is found in the chloroplast. It catalyses the reaction N-(5-phospho-beta-D-ribosyl)anthranilate = 1-(2-carboxyphenylamino)-1-deoxy-D-ribulose 5-phosphate. The protein operates within amino-acid biosynthesis; L-tryptophan biosynthesis; L-tryptophan from chorismate: step 3/5. This is N-(5'-phosphoribosyl)anthranilate isomerase 2, chloroplastic (PAI2) from Arabidopsis thaliana (Mouse-ear cress).